A 440-amino-acid chain; its full sequence is Xylose isomerase (440 aa).

Active-site residues include His-100 and Asp-103. Positions 231, 267, 270, 295, 306, 308, and 338 each coordinate Mg(2+).

This sequence belongs to the xylose isomerase family. In terms of assembly, homotetramer. Mg(2+) serves as cofactor.

The protein resides in the cytoplasm. The enzyme catalyses alpha-D-xylose = alpha-D-xylulofuranose. The chain is Xylose isomerase from Burkholderia cenocepacia (strain ATCC BAA-245 / DSM 16553 / LMG 16656 / NCTC 13227 / J2315 / CF5610) (Burkholderia cepacia (strain J2315)).